Reading from the N-terminus, the 143-residue chain is 3-hydroxyacyl-[acyl-carrier-protein] dehydratase FabZ (143 aa).

Histidine 49 is a catalytic residue.

Belongs to the thioester dehydratase family. FabZ subfamily.

The protein localises to the cytoplasm. It carries out the reaction a (3R)-hydroxyacyl-[ACP] = a (2E)-enoyl-[ACP] + H2O. Its function is as follows. Involved in unsaturated fatty acids biosynthesis. Catalyzes the dehydration of short chain beta-hydroxyacyl-ACPs and long chain saturated and unsaturated beta-hydroxyacyl-ACPs. The polypeptide is 3-hydroxyacyl-[acyl-carrier-protein] dehydratase FabZ (Wolbachia pipientis wMel).